A 122-amino-acid chain; its full sequence is UPF0382 membrane protein SERP0230 (122 aa).

4 helical membrane-spanning segments follow: residues 3-23 (VFII…AFGA), 46-66 (MYHG…SINV), 69-89 (AGWL…FLAL), and 98-118 (ITPI…IATL).

It belongs to the UPF0382 family.

Its subcellular location is the cell membrane. This Staphylococcus epidermidis (strain ATCC 35984 / DSM 28319 / BCRC 17069 / CCUG 31568 / BM 3577 / RP62A) protein is UPF0382 membrane protein SERP0230.